Reading from the N-terminus, the 59-residue chain is Large ribosomal subunit protein bL32c (59 aa).

Belongs to the bacterial ribosomal protein bL32 family.

Its subcellular location is the plastid. It localises to the chloroplast. In Physcomitrium patens (Spreading-leaved earth moss), this protein is Large ribosomal subunit protein bL32c.